The following is a 62-amino-acid chain: MIPVRCFSCGKVISNYWDEYKRRVTDGEGSAAVLDDLGITRYCCRRMFLSHVELVDVLSPYQ.

Residues Cys6, Cys9, Cys43, and Cys44 each contribute to the Zn(2+) site.

This sequence belongs to the archaeal Rpo10/eukaryotic RPB10 RNA polymerase subunit family. In terms of assembly, part of the RNA polymerase complex. Zn(2+) is required as a cofactor.

The protein localises to the cytoplasm. The catalysed reaction is RNA(n) + a ribonucleoside 5'-triphosphate = RNA(n+1) + diphosphate. In terms of biological role, DNA-dependent RNA polymerase (RNAP) catalyzes the transcription of DNA into RNA using the four ribonucleoside triphosphates as substrates. This is DNA-directed RNA polymerase subunit Rpo10 from Methanosarcina acetivorans (strain ATCC 35395 / DSM 2834 / JCM 12185 / C2A).